The primary structure comprises 143 residues: Large ribosomal subunit protein uL13 (143 aa).

The protein belongs to the universal ribosomal protein uL13 family. Part of the 50S ribosomal subunit.

Its function is as follows. This protein is one of the early assembly proteins of the 50S ribosomal subunit, although it is not seen to bind rRNA by itself. It is important during the early stages of 50S assembly. In Prochlorococcus marinus (strain MIT 9301), this protein is Large ribosomal subunit protein uL13.